The following is a 235-amino-acid chain: Geranylgeranylglyceryl phosphate synthase (235 aa).

A sn-glycerol 1-phosphate-binding site is contributed by Lys-13. Mg(2+)-binding residues include Asp-15 and Thr-42. Sn-glycerol 1-phosphate-binding positions include 162–167, Gly-192, and 212–213; these read YVEYSG and GD.

Belongs to the GGGP/HepGP synthase family. Group I subfamily. Mg(2+) is required as a cofactor.

Its subcellular location is the cytoplasm. It carries out the reaction sn-glycerol 1-phosphate + (2E,6E,10E)-geranylgeranyl diphosphate = sn-3-O-(geranylgeranyl)glycerol 1-phosphate + diphosphate. The protein operates within membrane lipid metabolism; glycerophospholipid metabolism. Functionally, prenyltransferase that catalyzes the transfer of the geranylgeranyl moiety of geranylgeranyl diphosphate (GGPP) to the C3 hydroxyl of sn-glycerol-1-phosphate (G1P). This reaction is the first ether-bond-formation step in the biosynthesis of archaeal membrane lipids. The sequence is that of Geranylgeranylglyceryl phosphate synthase from Natronomonas pharaonis (strain ATCC 35678 / DSM 2160 / CIP 103997 / JCM 8858 / NBRC 14720 / NCIMB 2260 / Gabara) (Halobacterium pharaonis).